Reading from the N-terminus, the 147-residue chain is Small ribosomal subunit protein uS12 (147 aa).

Belongs to the universal ribosomal protein uS12 family. In terms of assembly, part of the 30S ribosomal subunit.

Functionally, with S4 and S5 plays an important role in translational accuracy. Located at the interface of the 30S and 50S subunits. In Pyrobaculum calidifontis (strain DSM 21063 / JCM 11548 / VA1), this protein is Small ribosomal subunit protein uS12.